The following is a 138-amino-acid chain: Protein NrdI (138 aa).

It belongs to the NrdI family.

Functionally, probably involved in ribonucleotide reductase function. In Mycobacterium leprae (strain TN), this protein is Protein NrdI.